A 221-amino-acid chain; its full sequence is Iron-sulfur cluster repair protein YtfE (221 aa).

It belongs to the RIC family. YtfE subfamily. As to quaternary structure, homodimer.

The protein resides in the cytoplasm. Di-iron-containing protein involved in the repair of iron-sulfur clusters damaged by oxidative and nitrosative stress conditions. The chain is Iron-sulfur cluster repair protein YtfE from Edwardsiella ictaluri (strain 93-146).